The following is a 205-amino-acid chain: Golgi apparatus membrane protein TVP23 homolog B (205 aa).

M1 carries the N-acetylmethionine modification. The segment covering 1-21 has biased composition (acidic residues); that stretch reads MLSQDSNDDTEDVSLFDAEEE. The interval 1-27 is disordered; the sequence is MLSQDSNDDTEDVSLFDAEEETTNRPR. Transmembrane regions (helical) follow at residues 34 to 53, 54 to 72, 126 to 146, and 152 to 172; these read PVASFFHLFFRVSAVVVYLL, CELLSSSFIACMVTIILLL, IFWLGLIACPVLWVIFAFSAL, and KWLAVVIMGVVLQGANLYGYI.

The protein belongs to the TVP23 family.

Its subcellular location is the membrane. The protein is Golgi apparatus membrane protein TVP23 homolog B (Tvp23b) of Mus musculus (Mouse).